The primary structure comprises 117 residues: V-type proton ATPase subunit G (117 aa).

This sequence belongs to the V-ATPase G subunit family. In terms of assembly, V-ATPase is a heteromultimeric enzyme made up of two complexes: the ATP-hydrolytic V1 complex and the proton translocation V0 complex. The V1 complex consists of three catalytic AB heterodimers that form a heterohexamer, three peripheral stalks each consisting of EG heterodimers, one central rotor including subunits D and F, and the regulatory subunits C and H. The proton translocation complex V0 consists of the proton transport subunit a, a ring of proteolipid subunits c9c'', rotary subunit d, subunits e and f, and the accessory subunits VhaAC45 and ATP6AP2.

Functionally, subunit of the V1 complex of vacuolar(H+)-ATPase (V-ATPase), a multisubunit enzyme composed of a peripheral complex (V1) that hydrolyzes ATP and a membrane integral complex (V0) that translocates protons. V-ATPase is responsible for acidifying and maintaining the pH of intracellular compartments and in some cell types, is targeted to the plasma membrane, where it is responsible for acidifying the extracellular environment. In enterocytes, acts as part of a pHCl-2 sensory pathway which mediates Tor-dependent larval growth and metabolism in response to zinc availability. Likely acts in maintaining enterocyte lysosomal acidification which consequently promotes Tor activation at the lysosome membrane. The polypeptide is V-type proton ATPase subunit G (Vha13) (Drosophila melanogaster (Fruit fly)).